Reading from the N-terminus, the 431-residue chain is Serine hydroxymethyltransferase 2 (431 aa).

(6S)-5,6,7,8-tetrahydrofolate contacts are provided by residues Leu131 and 135–137 (GHL). Lys240 bears the N6-(pyridoxal phosphate)lysine mark. Position 256 (Glu256) interacts with (6S)-5,6,7,8-tetrahydrofolate.

The protein belongs to the SHMT family. In terms of assembly, homodimer. It depends on pyridoxal 5'-phosphate as a cofactor.

Its subcellular location is the cytoplasm. It carries out the reaction (6R)-5,10-methylene-5,6,7,8-tetrahydrofolate + glycine + H2O = (6S)-5,6,7,8-tetrahydrofolate + L-serine. Its pathway is one-carbon metabolism; tetrahydrofolate interconversion. It functions in the pathway amino-acid biosynthesis; glycine biosynthesis; glycine from L-serine: step 1/1. Functionally, catalyzes the reversible interconversion of serine and glycine with tetrahydrofolate (THF) serving as the one-carbon carrier. This reaction serves as the major source of one-carbon groups required for the biosynthesis of purines, thymidylate, methionine, and other important biomolecules. Also exhibits THF-independent aldolase activity toward beta-hydroxyamino acids, producing glycine and aldehydes, via a retro-aldol mechanism. This Vibrio vulnificus (strain YJ016) protein is Serine hydroxymethyltransferase 2.